The chain runs to 208 residues: Large ribosomal subunit protein uL4 (208 aa).

Residues 46-97 (QGTHKTKTRAEVRGGGKKPYRQKGTGNARQGSSRSPIMVGGGTIFGPQPRSY) are disordered. Over residues 69–80 (GTGNARQGSSRS) the composition is skewed to polar residues.

The protein belongs to the universal ribosomal protein uL4 family. As to quaternary structure, part of the 50S ribosomal subunit.

Its function is as follows. One of the primary rRNA binding proteins, this protein initially binds near the 5'-end of the 23S rRNA. It is important during the early stages of 50S assembly. It makes multiple contacts with different domains of the 23S rRNA in the assembled 50S subunit and ribosome. Forms part of the polypeptide exit tunnel. In Chlorobaculum parvum (strain DSM 263 / NCIMB 8327) (Chlorobium vibrioforme subsp. thiosulfatophilum), this protein is Large ribosomal subunit protein uL4.